The following is a 540-amino-acid chain: Fumonisin B1 esterase (540 aa).

The active-site Acyl-ester intermediate is S240. Catalysis depends on charge relay system residues E356 and H448. Residues 521-540 are disordered; that stretch reads QVGSGEGLGVSPSKACQPSK.

The protein belongs to the type-B carboxylesterase/lipase family.

It catalyses the reaction fumonisin B1 + 2 H2O = 2 tricarballylate + (2S,3S,5R,10R,12S,14S,15R,16R)-2-amino-12,16-dimethylicosane-3,5,10,14,15-pentol + 2 H(+). Functionally, involved in degradation of fumonisin B1. Catalyzes the hydrolysis of fumonisin B1 (FB1) to aminopentol (HFB1). In Sphingopyxis macrogoltabida (Sphingomonas macrogoltabidus), this protein is Fumonisin B1 esterase (fumD).